A 1162-amino-acid polypeptide reads, in one-letter code: Reticulon-4 (1162 aa).

N-acetylmethionine is present on methionine 1. The disordered stretch occupies residues 1–183 (MEDIDQSSLV…ALPAASEPVI (183 aa)). Over 1–988 (MEDIDQSSLV…LYWRDIKKTG (988 aa)) the chain is Cytoplasmic. Phosphoserine occurs at positions 7 and 16. Over residues 7–16 (SSLVSSSADS) the composition is skewed to low complexity. The span at 31–54 (EPEDEEDEEDEEEEEDDEDLEELE) shows a compositional bias: acidic residues. Residues 85–99 (PPAPRGPLPAAPPTA) are compositionally biased toward pro residues. A Phosphoserine modification is found at serine 105. Over residues 109 to 127 (SPAASAPSLPPAAAVLPSK) the composition is skewed to low complexity. Residues serine 145, serine 165, serine 167, serine 329, and serine 344 each carry the phosphoserine modification. Threonine 348 is subject to Phosphothreonine. Over residues 408-422 (SLEQKGHGKDSESRN) the composition is skewed to basic and acidic residues. The tract at residues 408–432 (SLEQKGHGKDSESRNENASFPRTPE) is disordered. Residue serine 426 is modified to Phosphoserine. Threonine 430 is subject to Phosphothreonine. Phosphoserine occurs at positions 489, 690, 727, 768, and 832. A disordered region spans residues 711-730 (ELVDDSSPESEPVDLFSDDS). Positions 713–730 (VDDSSPESEPVDLFSDDS) are enriched in acidic residues. Threonine 834 carries the post-translational modification Phosphothreonine. Residues serine 857 and serine 961 each carry the phosphoserine modification. Residues 975 to 1162 (VVDLLYWRDI…KIPGLKRKAE (188 aa)) form the Reticulon domain. A helical membrane pass occupies residues 989–1009 (VVFGASLFLLLSLTVFSIVSV). Over 1010-1078 (TAYIALALLS…VNSTIKELRR (69 aa)) the chain is Lumenal. N6-acetyllysine is present on lysine 1074. A helical membrane pass occupies residues 1079 to 1099 (LFLVDDLVDSLKFAVLMWVFT). At 1100-1162 (YVGALFNGLT…KIPGLKRKAE (63 aa)) the chain is on the cytoplasmic side.

Binds to RTN4R. Interacts with ATL1. Interacts with TMEM170A. Interacts with RTN4IP1. As to quaternary structure, interacts in trans with CNTNAP1. Interacts with REEP5. Interacts with GPR50. Interacts with synaptic plasticity regulator PANTS; the interaction results in enhanced RTN4-mediated inhibition of AMPA receptor clustering. In terms of assembly, homodimer. Interacts with BAD/Bcl-xl and BCL2. Interact with RTN3. Interacts with NGBR. Interacts with SPTLC1. Interacts with GRAMD4. Interacts with CDH5. Interacts with BACE1 and BACE2. Interacts with REEP5. Interacts with RETREG3. Interacts with BACE1 and BACE2. Interacts with TMEM33. Expressed in cardiomyocytes (at protein level). Highly expressed in brain but not deteceted in aorta, femoral and carotid arteries. Main isoform expressed in neurons. As to expression, expressed in cardiomyocytes (at protein level). Expressed in splenocytes, T-cells, B-cells, bone marrow derived dendritic cells and macrophages (at protein level). Expressed in neurons. Highly expressed in endothelial cells and vascular smooth muscle cells, including blood vessels and mesenteric arteries. Expressed in bronchial and alveolar epithelial cells as well as vascular endothelial cells of lungs. In terms of tissue distribution, expressed in B-cells, bone marrow dendritic cells and macrophages (at protein level). Expressed in cardiomyocytes. As to expression, expressed at very low levels in neurons.

It localises to the endoplasmic reticulum membrane. The protein resides in the cell membrane. It is found in the synapse. Its subcellular location is the cell junction. Its function is as follows. Required to induce the formation and stabilization of endoplasmic reticulum (ER) tubules. They regulate membrane morphogenesis in the ER by promoting tubular ER production. They influence nuclear envelope expansion, nuclear pore complex formation and proper localization of inner nuclear membrane proteins. However each isoform have specific functions mainly depending on their tissue expression specificities. Developmental neurite growth regulatory factor with a role as a negative regulator of axon-axon adhesion and growth, and as a facilitator of neurite branching. Regulates neurite fasciculation, branching and extension in the developing nervous system. Involved in down-regulation of growth, stabilization of wiring and restriction of plasticity in the adult CNS. Regulates the radial migration of cortical neurons via an RTN4R-LINGO1 containing receptor complex. Acts as a negative regulator of central nervous system angiogenesis. Inhibits spreading, migration and sprouting of primary brain microvascular endothelial cells (MVECs). Also induces the retraction of MVECs lamellipodia and filopodia in a ROCK pathway-dependent manner. Functionally, mainly function in endothelial cells and vascular smooth muscle cells, is also involved in immune system regulation. Modulator of vascular remodeling, promotes the migration of endothelial cells but inhibits the migration of vascular smooth muscle cells. Regulates endothelial sphingolipid biosynthesis with direct effects on vascular function and blood pressure. Inhibits serine palmitoyltransferase, SPTLC1, the rate-limiting enzyme of the novo sphingolipid biosynthetic pathway, thereby controlling production of endothelial sphingosine-1-phosphate (S1P). Required to promote macrophage homing and functions such as cytokine/chemokine gene expression involved in angiogenesis, arteriogenesis and tissue repair. Mediates ICAM1 induced transendothelial migration of leukocytes such as monocytes and neutrophils and acute inflammation. Necessary for immune responses triggered by nucleic acid sensing TLRs, such as TLR9, is required for proper TLR9 location to endolysosomes. Also involved in immune response to LPS. Plays a role in liver regeneration through the modulation of hepatocytes proliferation. Reduces the anti-apoptotic activity of Bcl-xl and Bcl-2. This is likely consecutive to their change in subcellular location, from the mitochondria to the endoplasmic reticulum, after binding and sequestration. With isoform C, inhibits BACE1 activity and amyloid precursor protein processing. In terms of biological role, regulates cardiomyocyte apoptosis upon hypoxic conditions. With isoform B, inhibits BACE1 activity and amyloid precursor protein processing. The polypeptide is Reticulon-4 (Mus musculus (Mouse)).